We begin with the raw amino-acid sequence, 156 residues long: ATP synthase subunit b (156 aa).

The chain crosses the membrane as a helical span at residues 7–27; the sequence is LIGQTVAFIIFVWFCMKFVWP.

This sequence belongs to the ATPase B chain family. As to quaternary structure, F-type ATPases have 2 components, F(1) - the catalytic core - and F(0) - the membrane proton channel. F(1) has five subunits: alpha(3), beta(3), gamma(1), delta(1), epsilon(1). F(0) has three main subunits: a(1), b(2) and c(10-14). The alpha and beta chains form an alternating ring which encloses part of the gamma chain. F(1) is attached to F(0) by a central stalk formed by the gamma and epsilon chains, while a peripheral stalk is formed by the delta and b chains.

It is found in the cell inner membrane. Its function is as follows. F(1)F(0) ATP synthase produces ATP from ADP in the presence of a proton or sodium gradient. F-type ATPases consist of two structural domains, F(1) containing the extramembraneous catalytic core and F(0) containing the membrane proton channel, linked together by a central stalk and a peripheral stalk. During catalysis, ATP synthesis in the catalytic domain of F(1) is coupled via a rotary mechanism of the central stalk subunits to proton translocation. Component of the F(0) channel, it forms part of the peripheral stalk, linking F(1) to F(0). This chain is ATP synthase subunit b, found in Shewanella sp. (strain MR-4).